A 710-amino-acid polypeptide reads, in one-letter code: Ephexin-1 (710 aa).

2 stretches are compositionally biased toward basic and acidic residues: residues 1-11 and 26-41; these read METRESEDLEK and EPAK…KEET. Residues 1–143 are disordered; that stretch reads METRESEDLE…PGNGATPEEW (143 aa). A regulatory region; modulates activity toward RHOA, RAC1 and CDC42 region spans residues 1–273; sequence METRESEDLE…LEILQPEEIK (273 aa). Composition is skewed to polar residues over residues 89–102 and 127–136; these read ADSQ…NEPL and MSESSSTPGN. Residue Tyr-179 is modified to Phosphotyrosine. Residues 194 to 236 are disordered; it reads RRQQDAEIEDNTNGSPASEDTPEEEEEEEEEEEPASPPERKTL. Positions 213–227 are enriched in acidic residues; that stretch reads DTPEEEEEEEEEEEP. A DH domain is found at 273 to 457; the sequence is KLQEAMFELV…EMVVKACNEG (185 aa). The region spanning 489–601 is the PH domain; it reads WLLKQGELQQ…WMTSLAPNRR (113 aa). Residues 612–673 form the SH3 domain; sequence LDCPQVQCVH…PSSMTEEILN (62 aa). Residues 687-699 are compositionally biased toward basic and acidic residues; that stretch reads VHKMDDPQRSQNK. The interval 687–710 is disordered; it reads VHKMDDPQRSQNKDRRKLGSRNRQ. Positions 700 to 710 are enriched in basic residues; sequence DRRKLGSRNRQ.

In terms of assembly, interacts with CDK5R1 and EPHA4; activated by EPHA4 through the CDK5 kinase. In terms of processing, src-dependent phosphorylation at Tyr-179 upon EPHA4 activation increases the guanine exchange factor activity toward RHOA. Phosphorylation by CDK5 upon EPHA4 activation by EFNA1 may regulate dendritic spine morphogenesis. In terms of tissue distribution, highly expressed in brain specifically in caudate nucleus and to a lower extent in amygdala and hippocampus. Also detected in lung.

The protein localises to the cytoplasm. It is found in the membrane. It localises to the cell projection. Its subcellular location is the growth cone. Acts as a guanine nucleotide exchange factor (GEF) which differentially activates the GTPases RHOA, RAC1 and CDC42. Plays a role in axon guidance regulating ephrin-induced growth cone collapse and dendritic spine morphogenesis. Upon activation by ephrin through EPHA4, the GEF activity switches toward RHOA resulting in its activation. Activated RHOA promotes cone retraction at the expense of RAC1- and CDC42-stimulated growth cone extension. This Homo sapiens (Human) protein is Ephexin-1 (NGEF).